The primary structure comprises 467 residues: Uronate isomerase (467 aa).

It belongs to the metallo-dependent hydrolases superfamily. Uronate isomerase family.

The enzyme catalyses D-glucuronate = D-fructuronate. It carries out the reaction aldehydo-D-galacturonate = keto-D-tagaturonate. The protein operates within carbohydrate metabolism; pentose and glucuronate interconversion. The protein is Uronate isomerase of Solibacter usitatus (strain Ellin6076).